Here is a 413-residue protein sequence, read N- to C-terminus: uncharacterized protein (413 aa).

The chain crosses the membrane as a helical span at residues 25 to 47 (IVNLSALLPLITSTTSTAGSIIT).

It is found in the host membrane. This is an uncharacterized protein from Acidianus sp. F28 (AFV-2).